Reading from the N-terminus, the 331-residue chain is Germ cell-specific gene 1-like protein (331 aa).

Residues 1-8 (MKTSRRGR) lie on the Cytoplasmic side of the membrane. The chain crosses the membrane as a helical span at residues 9-29 (ALLAVALNLLALLFATTAFLT). Topologically, residues 30–132 (THWCQGTQRV…FIDLAPASEK (103 aa)) are extracellular. The chain crosses the membrane as a helical span at residues 133–153 (GVLWLSVVSEVLYILLLVVGF). The Cytoplasmic portion of the chain corresponds to 154 to 173 (SLMCLELFHSSNVIDGLKLN). The chain crosses the membrane as a helical span at residues 174-194 (AFAAVFTVLSGLLGMVAHMMY). Topologically, residues 195 to 217 (TQVFQVTVSLGPEDWRPHSWDYG) are extracellular. The helical transmembrane segment at 218 to 238 (WSFCLAWGSFTCCMAASVTTL) threads the bilayer. Topologically, residues 239-331 (NSYTKTVIEF…RQCWVLGHWV (93 aa)) are cytoplasmic.

It belongs to the GSG1 family. In terms of assembly, component of the inner core of AMPAR complex. AMPAR complex consists of an inner core made of 4 pore-forming GluA/GRIA proteins (GRIA1, GRIA2, GRIA3 and GRIA4) and 4 major auxiliary subunits arranged in a twofold symmetry. One of the two pairs of distinct binding sites is occupied either by CNIH2, CNIH3 or CACNG2, CACNG3. The other harbors CACNG2, CACNG3, CACNG4, CACNG8 or GSG1L. This inner core of AMPAR complex is complemented by outer core constituents binding directly to the GluA/GRIA proteins at sites distinct from the interaction sites of the inner core constituents. Outer core constituents include at least PRRT1, PRRT2, CKAMP44/SHISA9, FRRS1L and NRN1. The proteins of the inner and outer core serve as a platform for other, more peripherally associated AMPAR constituents. Alone or in combination, these auxiliary subunits control the gating and pharmacology of the AMPAR complex and profoundly impact their biogenesis and protein processing.

It localises to the cell membrane. It is found in the synapse. Its function is as follows. As a component of the inner core of AMPAR complex, modifies AMPA receptor (AMPAR) gating. This Homo sapiens (Human) protein is Germ cell-specific gene 1-like protein (GSG1L).